Here is a 328-residue protein sequence, read N- to C-terminus: N-acetyl-gamma-glutamyl-phosphate reductase (328 aa).

Cys143 is a catalytic residue.

The protein belongs to the NAGSA dehydrogenase family. Type 1 subfamily.

The protein resides in the cytoplasm. The catalysed reaction is N-acetyl-L-glutamate 5-semialdehyde + phosphate + NADP(+) = N-acetyl-L-glutamyl 5-phosphate + NADPH + H(+). It participates in amino-acid biosynthesis; L-arginine biosynthesis; N(2)-acetyl-L-ornithine from L-glutamate: step 3/4. Functionally, catalyzes the NADPH-dependent reduction of N-acetyl-5-glutamyl phosphate to yield N-acetyl-L-glutamate 5-semialdehyde. This chain is N-acetyl-gamma-glutamyl-phosphate reductase, found in Methanoregula boonei (strain DSM 21154 / JCM 14090 / 6A8).